We begin with the raw amino-acid sequence, 37 residues long: Photosystem II reaction center protein T (37 aa).

Residues 3 to 23 traverse the membrane as a helical segment; sequence ALVYTFLLVSTLGILFFAIFF.

It belongs to the PsbT family. As to quaternary structure, PSII is composed of 1 copy each of membrane proteins PsbA, PsbB, PsbC, PsbD, PsbE, PsbF, PsbH, PsbI, PsbJ, PsbK, PsbL, PsbM, PsbT, PsbY, PsbZ, Psb30/Ycf12, at least 3 peripheral proteins of the oxygen-evolving complex and a large number of cofactors. It forms dimeric complexes.

The protein resides in the plastid. It localises to the chloroplast thylakoid membrane. Functionally, found at the monomer-monomer interface of the photosystem II (PS II) dimer, plays a role in assembly and dimerization of PSII. PSII is a light-driven water plastoquinone oxidoreductase, using light energy to abstract electrons from H(2)O, generating a proton gradient subsequently used for ATP formation. The sequence is that of Photosystem II reaction center protein T from Ephedra sinica (Chinese ephedra).